We begin with the raw amino-acid sequence, 215 residues long: Cytochrome c biogenesis ATP-binding export protein CcmA (215 aa).

In terms of domain architecture, ABC transporter spans 8–215 (LQATALACER…RDLDLGQWSA (208 aa)). 40-47 (GPNGCGKT) is an ATP binding site.

It belongs to the ABC transporter superfamily. CcmA exporter (TC 3.A.1.107) family. As to quaternary structure, the complex is composed of two ATP-binding proteins (CcmA) and two transmembrane proteins (CcmB).

The protein localises to the cell inner membrane. It carries out the reaction heme b(in) + ATP + H2O = heme b(out) + ADP + phosphate + H(+). Part of the ABC transporter complex CcmAB involved in the biogenesis of c-type cytochromes; once thought to export heme, this seems not to be the case, but its exact role is uncertain. Responsible for energy coupling to the transport system. This is Cytochrome c biogenesis ATP-binding export protein CcmA from Pseudomonas syringae pv. syringae (strain B728a).